The following is a 196-amino-acid chain: Elongation factor Ts (196 aa).

Residues 80–83 (TDFV) are involved in Mg(2+) ion dislocation from EF-Tu.

This sequence belongs to the EF-Ts family.

Its subcellular location is the cytoplasm. In terms of biological role, associates with the EF-Tu.GDP complex and induces the exchange of GDP to GTP. It remains bound to the aminoacyl-tRNA.EF-Tu.GTP complex up to the GTP hydrolysis stage on the ribosome. The sequence is that of Elongation factor Ts from Desulfotalea psychrophila (strain LSv54 / DSM 12343).